Here is a 419-residue protein sequence, read N- to C-terminus: UDP-N-acetylglucosamine 1-carboxyvinyltransferase (419 aa).

22-23 contributes to the phosphoenolpyruvate binding site; it reads KN. Arg-93 contributes to the UDP-N-acetyl-alpha-D-glucosamine binding site. Cys-117 serves as the catalytic Proton donor. The residue at position 117 (Cys-117) is a 2-(S-cysteinyl)pyruvic acid O-phosphothioketal. Positions 307 and 329 each coordinate UDP-N-acetyl-alpha-D-glucosamine.

This sequence belongs to the EPSP synthase family. MurA subfamily.

It is found in the cytoplasm. It catalyses the reaction phosphoenolpyruvate + UDP-N-acetyl-alpha-D-glucosamine = UDP-N-acetyl-3-O-(1-carboxyvinyl)-alpha-D-glucosamine + phosphate. Its pathway is cell wall biogenesis; peptidoglycan biosynthesis. Cell wall formation. Adds enolpyruvyl to UDP-N-acetylglucosamine. This Shewanella sp. (strain ANA-3) protein is UDP-N-acetylglucosamine 1-carboxyvinyltransferase.